The following is a 206-amino-acid chain: Uridine kinase (206 aa).

11–18 (GGTGSGKS) contacts ATP.

Belongs to the uridine kinase family.

The protein resides in the cytoplasm. The enzyme catalyses uridine + ATP = UMP + ADP + H(+). The catalysed reaction is cytidine + ATP = CMP + ADP + H(+). It functions in the pathway pyrimidine metabolism; CTP biosynthesis via salvage pathway; CTP from cytidine: step 1/3. The protein operates within pyrimidine metabolism; UMP biosynthesis via salvage pathway; UMP from uridine: step 1/1. This Clostridium botulinum (strain Okra / Type B1) protein is Uridine kinase.